We begin with the raw amino-acid sequence, 470 residues long: Sulfate adenylyltransferase subunit 1 (470 aa).

Positions 22–236 (KELLRFITCG…YLETIKIDYA (215 aa)) constitute a tr-type G domain. Residues 31–38 (GSVDDGKS) form a G1 region. 31–38 (GSVDDGKS) provides a ligand contact to GTP. Positions 89–93 (GITID) are G2. The tract at residues 110-113 (DTPG) is G3. Residues 110 to 114 (DTPGH) and 165 to 168 (NKMD) contribute to the GTP site. The G4 stretch occupies residues 165–168 (NKMD). The interval 202–204 (SAL) is G5.

The protein belongs to the TRAFAC class translation factor GTPase superfamily. Classic translation factor GTPase family. CysN/NodQ subfamily. Heterodimer composed of CysD, the smaller subunit, and CysN.

It catalyses the reaction sulfate + ATP + H(+) = adenosine 5'-phosphosulfate + diphosphate. Its pathway is sulfur metabolism; hydrogen sulfide biosynthesis; sulfite from sulfate: step 1/3. In terms of biological role, with CysD forms the ATP sulfurylase (ATPS) that catalyzes the adenylation of sulfate producing adenosine 5'-phosphosulfate (APS) and diphosphate, the first enzymatic step in sulfur assimilation pathway. APS synthesis involves the formation of a high-energy phosphoric-sulfuric acid anhydride bond driven by GTP hydrolysis by CysN coupled to ATP hydrolysis by CysD. The polypeptide is Sulfate adenylyltransferase subunit 1 (Francisella tularensis subsp. novicida (strain U112)).